The primary structure comprises 223 residues: MSDDHFDDEQEGSSGGPRHPMAARFRGYLPVVVDVETGGFNSATDALLEIAATTIGMDEKGFVFPEHTYFFRVEPFEGANIEAAALEFTGIKLDHPLRMAVSEETALTDIFRGVRKALKANGCKRAILVGHNSSFDLGFLNAAVARLDMKRNPFHPFSSFDTATLAGLAYGQTVLAKACQSADIDFDGREAHSARYDTEKTAELFCGIVNRWKQMGGWQDFDD.

The span at 1–11 (MSDDHFDDEQE) shows a compositional bias: acidic residues. Residues 1-21 (MSDDHFDDEQEGSSGGPRHPM) form a disordered region. The Exonuclease domain occupies 31-205 (VVVDVETGGF…YDTEKTAELF (175 aa)). Residues Asp-34, Glu-36, His-192, and Asp-197 each contribute to the Mg(2+) site. His-192 (proton donor/acceptor) is an active-site residue.

Belongs to the RNase T family. Homodimer. Mg(2+) serves as cofactor.

Its function is as follows. Trims short 3' overhangs of a variety of RNA species, leaving a one or two nucleotide 3' overhang. Responsible for the end-turnover of tRNA: specifically removes the terminal AMP residue from uncharged tRNA (tRNA-C-C-A). Also appears to be involved in tRNA biosynthesis. The protein is Ribonuclease T of Pseudomonas fluorescens (strain ATCC BAA-477 / NRRL B-23932 / Pf-5).